A 129-amino-acid chain; its full sequence is Putative pre-16S rRNA nuclease (129 aa).

The protein belongs to the YqgF nuclease family.

It is found in the cytoplasm. Its function is as follows. Could be a nuclease involved in processing of the 5'-end of pre-16S rRNA. The sequence is that of Putative pre-16S rRNA nuclease from Campylobacter jejuni subsp. doylei (strain ATCC BAA-1458 / RM4099 / 269.97).